Reading from the N-terminus, the 113-residue chain is HIG1 domain-containing protein C25B8.07c, mitochondrial (113 aa).

The disordered stretch occupies residues 1–27 (MSSKLPKKSEENLELPTFPASEESLSR). An HIG1 domain is found at 12–103 (NLELPTFPAS…PPRREAPSNS (92 aa)). 2 helical membrane-spanning segments follow: residues 39–59 (PFIP…GYYI) and 75–95 (VMSQ…IGPP).

The protein resides in the mitochondrion membrane. This chain is HIG1 domain-containing protein C25B8.07c, mitochondrial, found in Schizosaccharomyces pombe (strain 972 / ATCC 24843) (Fission yeast).